Here is a 237-residue protein sequence, read N- to C-terminus: tRNA(His) guanylyltransferase (237 aa).

D29, G30, and D77 together coordinate Mg(2+). GTP-binding positions include 29–34 (DGKHFH) and 76–77 (SD).

It belongs to the tRNA(His) guanylyltransferase family. It depends on Mg(2+) as a cofactor.

The catalysed reaction is a 5'-end ribonucleotide-tRNA(His) + GTP + ATP + H2O = a 5'-end phospho-guanosine-ribonucleotide-tRNA(His) + AMP + 2 diphosphate + H(+). Adds a GMP to the 5'-end of tRNA(His) after transcription and RNase P cleavage. The sequence is that of tRNA(His) guanylyltransferase (THG1) from Eremothecium gossypii (strain ATCC 10895 / CBS 109.51 / FGSC 9923 / NRRL Y-1056) (Yeast).